Consider the following 149-residue polypeptide: Large ribosomal subunit protein bL9 (149 aa).

The protein belongs to the bacterial ribosomal protein bL9 family.

In terms of biological role, binds to the 23S rRNA. The protein is Large ribosomal subunit protein bL9 of Thiobacillus denitrificans (strain ATCC 25259 / T1).